Reading from the N-terminus, the 494-residue chain is Glycerol kinase (494 aa).

Threonine 13 provides a ligand contact to ADP. Positions 13, 14, and 15 each coordinate ATP. Threonine 13 is a sn-glycerol 3-phosphate binding site. Arginine 17 lines the ADP pocket. Residues arginine 83, glutamate 84, tyrosine 135, and aspartate 244 each contribute to the sn-glycerol 3-phosphate site. Glycerol contacts are provided by arginine 83, glutamate 84, tyrosine 135, aspartate 244, and glutamine 245. Threonine 266 and glycine 309 together coordinate ADP. The ATP site is built by threonine 266, glycine 309, glutamine 313, and glycine 410. The ADP site is built by glycine 410 and asparagine 414.

This sequence belongs to the FGGY kinase family.

It carries out the reaction glycerol + ATP = sn-glycerol 3-phosphate + ADP + H(+). The protein operates within polyol metabolism; glycerol degradation via glycerol kinase pathway; sn-glycerol 3-phosphate from glycerol: step 1/1. Inhibited by fructose 1,6-bisphosphate (FBP). Its function is as follows. Key enzyme in the regulation of glycerol uptake and metabolism. Catalyzes the phosphorylation of glycerol to yield sn-glycerol 3-phosphate. The chain is Glycerol kinase from Shewanella oneidensis (strain ATCC 700550 / JCM 31522 / CIP 106686 / LMG 19005 / NCIMB 14063 / MR-1).